The sequence spans 422 residues: Adenylosuccinate synthetase (422 aa).

GTP-binding positions include 11–17 (GDEGKGK) and 39–41 (GHT). Aspartate 12 acts as the Proton acceptor in catalysis. The Mg(2+) site is built by aspartate 12 and glycine 39. Residues 12–15 (DEGK), 37–40 (NAGH), threonine 129, arginine 143, asparagine 219, threonine 234, and arginine 298 contribute to the IMP site. Histidine 40 acts as the Proton donor in catalysis. 294 to 300 (VTTGRRR) lines the substrate pocket. GTP-binding positions include arginine 300, 326 to 328 (KLD), and 409 to 411 (GTG).

This sequence belongs to the adenylosuccinate synthetase family. As to quaternary structure, homodimer. Mg(2+) serves as cofactor.

Its subcellular location is the cytoplasm. It catalyses the reaction IMP + L-aspartate + GTP = N(6)-(1,2-dicarboxyethyl)-AMP + GDP + phosphate + 2 H(+). It participates in purine metabolism; AMP biosynthesis via de novo pathway; AMP from IMP: step 1/2. Its function is as follows. Plays an important role in the de novo pathway and in the salvage pathway of purine nucleotide biosynthesis. Catalyzes the first committed step in the biosynthesis of AMP from IMP. In Blastomyces gilchristii (strain SLH14081) (Blastomyces dermatitidis), this protein is Adenylosuccinate synthetase.